We begin with the raw amino-acid sequence, 343 residues long: Heat-inducible transcription repressor HrcA (343 aa).

The protein belongs to the HrcA family.

Functionally, negative regulator of class I heat shock genes (grpE-dnaK-dnaJ and groELS operons). Prevents heat-shock induction of these operons. The polypeptide is Heat-inducible transcription repressor HrcA (Mycobacterium ulcerans (strain Agy99)).